Here is a 950-residue protein sequence, read N- to C-terminus: 2-oxoglutarate dehydrogenase E1 component (950 aa).

Belongs to the alpha-ketoglutarate dehydrogenase family. As to quaternary structure, homodimer. Part of the 2-oxoglutarate dehydrogenase (OGDH) complex composed of E1 (2-oxoglutarate dehydrogenase), E2 (dihydrolipoamide succinyltransferase) and E3 (dihydrolipoamide dehydrogenase); the complex contains multiple copies of the three enzymatic components (E1, E2 and E3). Thiamine diphosphate serves as cofactor.

It carries out the reaction N(6)-[(R)-lipoyl]-L-lysyl-[protein] + 2-oxoglutarate + H(+) = N(6)-[(R)-S(8)-succinyldihydrolipoyl]-L-lysyl-[protein] + CO2. In terms of biological role, E1 component of the 2-oxoglutarate dehydrogenase (OGDH) complex which catalyzes the decarboxylation of 2-oxoglutarate, the first step in the conversion of 2-oxoglutarate to succinyl-CoA and CO(2). The protein is 2-oxoglutarate dehydrogenase E1 component of Geobacillus kaustophilus (strain HTA426).